Consider the following 80-residue polypeptide: Homeobox protein 7 (80 aa).

Residues Ser8–Ser67 constitute a DNA-binding region (homeobox). A disordered region spans residues Arg60–Lys80. Residues Asn70–Lys80 are compositionally biased toward low complexity.

Its subcellular location is the nucleus. Putative transcription factor. This Dictyostelium discoideum (Social amoeba) protein is Homeobox protein 7 (hbx7).